A 37-amino-acid polypeptide reads, in one-letter code: Large ribosomal subunit protein bL36 (37 aa).

This sequence belongs to the bacterial ribosomal protein bL36 family.

The polypeptide is Large ribosomal subunit protein bL36 (Alkaliphilus metalliredigens (strain QYMF)).